The following is a 62-amino-acid chain: Amolopin-P1 (62 aa).

The N-terminal stretch at 1–22 is a signal peptide; it reads MFPMKKSLLLLFFFGPISLSFC. The propeptide occupies 23–44; it reads DQERGADEEENGGEVTEQEVKR.

Expressed by the skin glands.

It is found in the secreted. Its function is as follows. Antimicrobial peptide with activity against Gram-positive bacteria. Has been tested against S.aureus (MIC=37.5 ug/mL), against B.pumilus (MIC=75.0 ug/mL), B.cereus (no activity detected). Does not show activity against Gram-negative bacteria (E.coli, B.dysenteriae, A.calcoaceticus, P.aeruginosa) and fungi (C.albicans). Does not show hemolytic activity against rabbit erythrocytes. This Amolops loloensis (Lolokou Sucker Frog) protein is Amolopin-P1.